The chain runs to 162 residues: Probable chemoreceptor glutamine deamidase CheD (162 aa).

The protein belongs to the CheD family.

It catalyses the reaction L-glutaminyl-[protein] + H2O = L-glutamyl-[protein] + NH4(+). Its function is as follows. Probably deamidates glutamine residues to glutamate on methyl-accepting chemotaxis receptors (MCPs), playing an important role in chemotaxis. In Pyrococcus horikoshii (strain ATCC 700860 / DSM 12428 / JCM 9974 / NBRC 100139 / OT-3), this protein is Probable chemoreceptor glutamine deamidase CheD.